The chain runs to 237 residues: Uridylate kinase (237 aa).

10–13 (KLSG) is a binding site for ATP. Gly-51 is a binding site for UMP. Residues Gly-52 and Arg-56 each contribute to the ATP site. UMP-binding positions include Asp-71 and 132 to 139 (MGMPFFST). ATP contacts are provided by Asn-160, Tyr-166, and Asp-169.

This sequence belongs to the UMP kinase family. In terms of assembly, homohexamer.

The protein resides in the cytoplasm. It carries out the reaction UMP + ATP = UDP + ADP. It participates in pyrimidine metabolism; CTP biosynthesis via de novo pathway; UDP from UMP (UMPK route): step 1/1. Inhibited by UTP. In terms of biological role, catalyzes the reversible phosphorylation of UMP to UDP. This is Uridylate kinase from Nocardioides sp. (strain ATCC BAA-499 / JS614).